Consider the following 270-residue polypeptide: Putative pyruvate, phosphate dikinase regulatory protein (270 aa).

148–155 (GVSRTSKT) serves as a coordination point for ADP.

It belongs to the pyruvate, phosphate/water dikinase regulatory protein family. PDRP subfamily.

It catalyses the reaction N(tele)-phospho-L-histidyl/L-threonyl-[pyruvate, phosphate dikinase] + ADP = N(tele)-phospho-L-histidyl/O-phospho-L-threonyl-[pyruvate, phosphate dikinase] + AMP + H(+). The catalysed reaction is N(tele)-phospho-L-histidyl/O-phospho-L-threonyl-[pyruvate, phosphate dikinase] + phosphate + H(+) = N(tele)-phospho-L-histidyl/L-threonyl-[pyruvate, phosphate dikinase] + diphosphate. Bifunctional serine/threonine kinase and phosphorylase involved in the regulation of the pyruvate, phosphate dikinase (PPDK) by catalyzing its phosphorylation/dephosphorylation. The sequence is that of Putative pyruvate, phosphate dikinase regulatory protein from Bacillus cereus (strain B4264).